Consider the following 198-residue polypeptide: Imidazoleglycerol-phosphate dehydratase (198 aa).

It belongs to the imidazoleglycerol-phosphate dehydratase family.

It localises to the cytoplasm. The catalysed reaction is D-erythro-1-(imidazol-4-yl)glycerol 3-phosphate = 3-(imidazol-4-yl)-2-oxopropyl phosphate + H2O. It functions in the pathway amino-acid biosynthesis; L-histidine biosynthesis; L-histidine from 5-phospho-alpha-D-ribose 1-diphosphate: step 6/9. This chain is Imidazoleglycerol-phosphate dehydratase, found in Agrobacterium fabrum (strain C58 / ATCC 33970) (Agrobacterium tumefaciens (strain C58)).